The following is a 398-amino-acid chain: Cathepsin D (398 aa).

An N-terminal signal peptide occupies residues 1–20; sequence MAPRGLLVLLLLALVGPCAA. Positions 21-63 are cleaved as a propeptide — activation peptide; it reads LIRIPLTKFTSTRRMLTEVGSEIPDMNAITQFLKFKLGFADLA. The 318-residue stretch at 78–395 folds into the Peptidase A1 domain; that stretch reads YYGEIGIGTP…DRDNDSVGFA (318 aa). D96 is an active-site residue. C109 and C116 are disulfide-bonded. Residues N133 and N251 are each glycosylated (N-linked (GlcNAc...) asparagine). A disulfide bond links C274 and C278. Residue D283 is part of the active site. A disulfide bond links C317 and C354.

The protein belongs to the peptidase A1 family. Consists of a light chain and a heavy chain. Oocytic yolk, preovulatory follicles, liver.

It localises to the lysosome. It catalyses the reaction Specificity similar to, but narrower than, that of pepsin A. Does not cleave the 4-Gln-|-His-5 bond in B chain of insulin.. Its function is as follows. Acid protease active in intracellular protein breakdown. In chicken it is a key enzyme for yolk formation as it is capable of catalyzing intra oocytic break down of protein components of both vitellogenin and VLDL. This is Cathepsin D (CTSD) from Gallus gallus (Chicken).